Consider the following 367-residue polypeptide: MVLSSEASSAADHSAAAPIPTSSWPQLLGRLTEGKHLEPGQAGWAMEQIMSGNARPAQVAAFAVAMKMKVPTAGEVGELADVMLAYARPMPADLIRDDTVDIVGTGGDGVNTVNLSTMASIVVAAAGVPVVKHGNRAASSLAGGADTLESLGVRIDLGPDQVARSLNENGIGFCFAPQFHPSYRQASVVRREIGVPTVFNLLGPLTNPARPRAGLIGCAFADLAEIMAGVFATRGSSVLVVHGDDGLDELTTTTTSTIWRVQAGTVDKLTFDPGDFGFARAELSQLLGGDPQANAAEARAVLGGAAGPVRDAVVLNAAGAIVAHAGLSSRAEWLPAWQDGLQRAAVAIDSGAAEQLLARWVRFSQHV.

Over residues 1–17 the composition is skewed to low complexity; it reads MVLSSEASSAADHSAAA. The segment at 1 to 22 is disordered; sequence MVLSSEASSAADHSAAAPIPTS. 5-phospho-alpha-D-ribose 1-diphosphate contacts are provided by residues glycine 104, 107–108, threonine 112, 114–117, 132–140, and glycine 144; these read GD, NLST, and KHGNRAASS. Anthranilate is bound at residue glycine 104. Serine 116 serves as a coordination point for Mg(2+). Asparagine 135 lines the anthranilate pocket. Arginine 190 contributes to the anthranilate binding site. Aspartate 248 and glutamate 249 together coordinate Mg(2+).

This sequence belongs to the anthranilate phosphoribosyltransferase family. In terms of assembly, homodimer. Requires Mg(2+) as cofactor.

The catalysed reaction is N-(5-phospho-beta-D-ribosyl)anthranilate + diphosphate = 5-phospho-alpha-D-ribose 1-diphosphate + anthranilate. The protein operates within amino-acid biosynthesis; L-tryptophan biosynthesis; L-tryptophan from chorismate: step 2/5. In terms of biological role, catalyzes the transfer of the phosphoribosyl group of 5-phosphorylribose-1-pyrophosphate (PRPP) to anthranilate to yield N-(5'-phosphoribosyl)-anthranilate (PRA). The sequence is that of Anthranilate phosphoribosyltransferase from Mycobacterium ulcerans (strain Agy99).